A 424-amino-acid polypeptide reads, in one-letter code: Chloroquine resistance transporter (424 aa).

Residues 1-58 lie on the Cytoplasmic side of the membrane; that stretch reads MKFASKKNNQKNSSKNDERYRELDNLVQEGNGSRLGGGSCLGKCAHVFKLIFKEIKDN. The helical transmembrane segment at 59–79 threads the bilayer; it reads IFIYILSIIYLSVCVMNKIFA. The Vacuolar segment spans residues 80–90; it reads KRTLNKIGNYS. N-linked (GlcNAc...) asparagine glycosylation is present at N88. The chain crosses the membrane as a helical span at residues 91–111; it reads FVTSETHNFICMIMFFIVYSL. Over 112–127 the chain is Cytoplasmic; that stretch reads FGNKKGNSKERHRSFN. Residues 128-148 traverse the membrane as a helical segment; it reads LQFFAISMLDACSVILAFIGL. The Vacuolar segment spans residues 149 to 154; the sequence is TRTTGN. The helical transmembrane segment at 155–175 threads the bilayer; it reads IQSFVLQLSIPINMFFCFLIL. Topologically, residues 176-178 are cytoplasmic; it reads RYR. The chain crosses the membrane as a helical span at residues 179–199; sequence YHLYNYLGAVIIVVTIALVEM. Topologically, residues 200–209 are vacuolar; sequence KLSFETQEEN. Residues 210–230 traverse the membrane as a helical segment; the sequence is SIIFNLVLISALIPVCFSNMT. Residues 231-248 lie on the Cytoplasmic side of the membrane; sequence REIVFKKYKIDILRLNAM. A helical transmembrane segment spans residues 249–269; that stretch reads VSFFQLFTSCLILPVYTLPFL. The Vacuolar segment spans residues 270-317; the sequence is KQLHLPYNEIWTNIKNGFACLFLGRNTVVENCGLGMAKLCDDCDGAWK. 2 disulfides stabilise this stretch: C289–C312 and C301–C309. The chain crosses the membrane as a helical span at residues 318–338; it reads TFALFSFFNICDNLITSYIID. Topologically, residues 339–346 are cytoplasmic; sequence KFSTMTYT. Residues 347–367 traverse the membrane as a helical segment; the sequence is IVSCIQGPAIAIAYYFKFLAG. Residues 368 to 377 lie on the Vacuolar side of the membrane; it reads DVVREPRLLD. Residues 378–398 form a helical membrane-spanning segment; sequence FVTLFGYLFGSIIYRVGNIIL. The Cytoplasmic segment spans residues 399 to 424; sequence ERKKMRNEENEDSEGELTNVDSIITQ.

It belongs to the CRT-like transporter family. In terms of assembly, monomer.

The protein resides in the vacuole membrane. It carries out the reaction L-arginine(in) = L-arginine(out). The enzyme catalyses L-lysine(in) = L-lysine(out). It catalyses the reaction L-histidine(out) = L-histidine(in). The catalysed reaction is histamine(out) = histamine(in). It carries out the reaction spermidine(in) = spermidine(out). The enzyme catalyses Fe(3+)(in) = Fe(3+)(out). It catalyses the reaction Fe(2+)(in) = Fe(2+)(out). Its activity is regulated as follows. Transporter activity is trans-stimulated by host-derived peptides containing 4-11 amino acids. Trans-stimulation by hemoglobin-derived peptide VDPVNF is pH-dependent and sodium-independent. Saquinavir trans-stimulates transport of hemoglobin-derived peptide VDPVNF. Protons are non-competitive inhibitors of chloroquine transport. In terms of biological role, nutrient transporter. Substrate transport is pH-dependent. Can transport arginine, lysine, histidine, peptides, histamine and spermidine. May modulate activity of endogenous transporters. Involved in maintaining the osmotic homeostasis of the digestive vacuole. Required for the asexual intraerythrocytic proliferation of parasites. Can transport Fe(2+) and Fe(3+). The sequence is that of Chloroquine resistance transporter from Plasmodium falciparum.